A 291-amino-acid chain; its full sequence is ATP synthase subunit a (291 aa).

The next 5 helical transmembrane spans lie at isoleucine 48–tryptophan 68, isoleucine 108–isoleucine 128, aspartate 161–isoleucine 181, leucine 241–tryptophan 261, and alanine 262–valine 282.

It belongs to the ATPase A chain family. In terms of assembly, F-type ATPases have 2 components, CF(1) - the catalytic core - and CF(0) - the membrane proton channel. CF(1) has five subunits: alpha(3), beta(3), gamma(1), delta(1), epsilon(1). CF(0) has three main subunits: a(1), b(2) and c(9-12). The alpha and beta chains form an alternating ring which encloses part of the gamma chain. CF(1) is attached to CF(0) by a central stalk formed by the gamma and epsilon chains, while a peripheral stalk is formed by the delta and b chains.

It is found in the cell inner membrane. In terms of biological role, key component of the proton channel; it plays a direct role in the translocation of protons across the membrane. The polypeptide is ATP synthase subunit a (Acinetobacter baylyi (strain ATCC 33305 / BD413 / ADP1)).